Here is a 349-residue protein sequence, read N- to C-terminus: Microfibril-associated glycoprotein 3 (349 aa).

The N-terminal stretch at 1 to 21 (MKLHHCLSFLLVVTLVPAALS) is a signal peptide. Topologically, residues 22-139 (LEDVAPLGAN…TLRVIFTSGD (118 aa)) are extracellular. N31, N36, N63, and N103 each carry an N-linked (GlcNAc...) asparagine glycan. An Ig-like C2-type domain is found at 41-130 (PSFELSAGSY…SPARASYSVT (90 aa)). Cysteines 68 and 117 form a disulfide. A helical transmembrane segment spans residues 140–160 (MSVYYMVVCLIAFTITLILNV). Residues 161–349 (TRLCLMSTHL…EGSIHHRVSI (189 aa)) are Cytoplasmic-facing. Positions 280–349 (NPELGRSNSP…EGSIHHRVSI (70 aa)) are disordered. Over residues 311-331 (VHLQSETKSIGTDSQDSSHFS) the composition is skewed to polar residues.

In terms of processing, glycosylated.

Its subcellular location is the cell membrane. Functionally, component of the elastin-associated microfibrils. The polypeptide is Microfibril-associated glycoprotein 3 (Mfap3) (Mus musculus (Mouse)).